Consider the following 141-residue polypeptide: Molybdopterin synthase catalytic subunit 2 (141 aa).

Residues 37–39 (MIR), 103–104 (HR), K119, and 126–128 (KHQ) each bind substrate.

It belongs to the MoaE family. As to quaternary structure, heterotetramer of 2 MoaD subunits and 2 MoaE subunits. Also stable as homodimer. The enzyme changes between these two forms during catalysis.

It catalyses the reaction 2 [molybdopterin-synthase sulfur-carrier protein]-C-terminal-Gly-aminoethanethioate + cyclic pyranopterin phosphate + H2O = molybdopterin + 2 [molybdopterin-synthase sulfur-carrier protein]-C-terminal Gly-Gly + 2 H(+). It participates in cofactor biosynthesis; molybdopterin biosynthesis. In terms of biological role, converts molybdopterin precursor Z into molybdopterin. This requires the incorporation of two sulfur atoms into precursor Z to generate a dithiolene group. The sulfur is provided by MoaD. This is Molybdopterin synthase catalytic subunit 2 (moaE2) from Mycobacterium tuberculosis (strain CDC 1551 / Oshkosh).